Here is a 386-residue protein sequence, read N- to C-terminus: Succinate--CoA ligase [ADP-forming] subunit beta (386 aa).

The ATP-grasp domain maps to 9 to 244; that stretch reads KDLLTSYAIP…PSQENVRDVL (236 aa). Residues Lys-46, 53-55, Val-102, and Glu-107 contribute to the ATP site; that span reads GRG. The Mg(2+) site is built by Asn-199 and Asp-213. Substrate-binding positions include Asn-264 and 321–323; that span reads GIM.

Belongs to the succinate/malate CoA ligase beta subunit family. As to quaternary structure, heterotetramer of two alpha and two beta subunits. Mg(2+) serves as cofactor.

The catalysed reaction is succinate + ATP + CoA = succinyl-CoA + ADP + phosphate. It catalyses the reaction GTP + succinate + CoA = succinyl-CoA + GDP + phosphate. It participates in carbohydrate metabolism; tricarboxylic acid cycle; succinate from succinyl-CoA (ligase route): step 1/1. Functionally, succinyl-CoA synthetase functions in the citric acid cycle (TCA), coupling the hydrolysis of succinyl-CoA to the synthesis of either ATP or GTP and thus represents the only step of substrate-level phosphorylation in the TCA. The beta subunit provides nucleotide specificity of the enzyme and binds the substrate succinate, while the binding sites for coenzyme A and phosphate are found in the alpha subunit. The sequence is that of Succinate--CoA ligase [ADP-forming] subunit beta from Chlamydia abortus (strain DSM 27085 / S26/3) (Chlamydophila abortus).